A 69-amino-acid polypeptide reads, in one-letter code: Alpha-conotoxin Mr1.7a (69 aa).

A signal peptide spans 1-21; the sequence is MGMRMMFTVFLLVVLATTVVS. Residues 22 to 49 constitute a propeptide that is removed on maturation; sequence FTSNRVLDPAFRRRNAAAKASDLIALNA. 4-hydroxyproline; in Mr1.7b is present on residues proline 52 and proline 58. Cystine bridges form between cysteine 54–cysteine 60 and cysteine 55–cysteine 68. Positions 56 to 58 are lacks the Ser-Xaa-Pro motif that is crucial for potent interaction with nAChR; it reads THP. Cysteine 68 is modified (cysteine amide).

Belongs to the conotoxin A superfamily. In terms of processing, two 4-hydroxyprolines have been detected by MS but the assignment of which of the three prolines is modified is uncertain. In terms of tissue distribution, expressed by the venom duct.

It localises to the secreted. Acts as a co-agonist with PNU (an alpha-7 nAChR-selective allosteric modulator) at the endogenous alpha-7/CHRNA7 nicotinic acetylcholine receptors (nAChR) when tested in human SH-SY5Y neuroblastoma cells. Is the third alpha-conotoxin that acts as an agonist (after alpha-conotoxin SrIA/SrIB). Also acts as an antagonist at human alpha-7 nAChRs heterologously expressed in Xenopus oocytes. Has possibly a distinct nAChR binding mode from other alpha-conotoxins, due to a different three residue motif (lacks the Ser-Xaa-Pro motif). Its function is as follows. Acts as a weak partial agonist at alpha-7/CHRNA7 nicotinic acetylcholine receptors (nAChR) when tested in human SH-SY5Y neuroblastoma cells. Has possibly a distinct nAChR binding mode from other alpha-conotoxins, due to a different three residue motif (lacks the Ser-Xaa-Pro motif). This chain is Alpha-conotoxin Mr1.7a, found in Conus marmoreus (Marble cone).